The sequence spans 361 residues: mRNA export factor ICP27 homolog (361 aa).

The span at 1–15 (MEDSGNSSGSEASRS) shows a compositional bias: low complexity. Positions 1–107 (MEDSGNSSGS…SESARAAVSA (107 aa)) are disordered. Positions 16–36 (GSEERRPVRERLGSRPPERRP) are enriched in basic and acidic residues. The tract at residues 45-54 (RRRRGGRGGR) is RGG-box. Residues 80–99 (RQEADRPDGGPDAPPDRLSE) show a composition bias toward basic and acidic residues. Zn(2+) contacts are provided by Cys-253, His-328, Cys-332, and Cys-337. Residues 253 to 337 (CYLRDTPVDE…HKTGCDAPTC (85 aa)) form a CHC2-type zinc finger.

It belongs to the HHV-1 ICP27 protein family. In terms of assembly, homodimer. Homodimerization is required for transactivation. Associates in a complex with RNA, and host export factors NXF1/TAP and ALYREF; these interactions allow nuclear export of viral transcripts. Interacts with three host shuttling SR proteins SRSF1, SRSF3 and SRSF7. Interacts with host SRPK1. Interacts with IE62; this interaction enhances IE62 transactivation.

It is found in the host cytoplasm. The protein localises to the host nucleus. Its function is as follows. Multifunctional regulator of the expression of viral genes that mediates nuclear export of viral intronless mRNAs. This immediate early (EI) protein promotes the nuclear export of viral intronless mRNAs by interacting with mRNAs and host NXF1/TAP. The polypeptide is mRNA export factor ICP27 homolog (Suid herpesvirus 1 (strain Kaplan) (SuHV-1)).